A 364-amino-acid polypeptide reads, in one-letter code: Growth hormone secretagogue receptor type 1 (364 aa).

Topologically, residues 1 to 40 are extracellular; the sequence is MWNATPSEEPEPNVTLDLDWDASPGNDSLSDELLPLFPAP. Residues asparagine 13 and asparagine 26 are each glycosylated (N-linked (GlcNAc...) asparagine). A helical membrane pass occupies residues 41–66; the sequence is LLAGVTATCVALFVVGISGNLLTMLV. At 67-72 the chain is on the cytoplasmic side; it reads VSRFRE. Residues 73–96 form a helical membrane-spanning segment; sequence LRTTTNLYLSSMAFSDLLIFLCMP. The Extracellular segment spans residues 97–117; sequence LDLVRLWQYRPWNFGDLLCKL. Cysteine 115 and cysteine 197 form a disulfide bridge. Residues 118–139 traverse the membrane as a helical segment; sequence FQFVSESCTYATVLTITALSVE. Topologically, residues 140 to 162 are cytoplasmic; it reads RYFAICFPLRAKVVVTKGRVKLV. The chain crosses the membrane as a helical span at residues 163–183; it reads ILVIWAVAFCSAGPIFVLVGV. Over 184–211 the chain is Extracellular; it reads EHENGTDPRDTNECRATEFAVRSGLLTV. Asparagine 187 carries N-linked (GlcNAc...) asparagine glycosylation. The helical transmembrane segment at 212 to 235 threads the bilayer; it reads MVWVSSVFFFLPVFCLTVLYSLIG. Residues 236–263 are Cytoplasmic-facing; sequence RKLWRRRGDAAVGSSLRDQNHKQTVKML. Residues 264–285 traverse the membrane as a helical segment; it reads AVVVFAFILCWLPFHVGRYLFS. The Extracellular segment spans residues 286–302; that stretch reads KSFEPGSLEIAQISQYC. The chain crosses the membrane as a helical span at residues 303 to 326; it reads NLVSFVLFYLSAAINPILYNIMSK. Residues 327-364 are Cytoplasmic-facing; sequence KYRVAVFKLLGFESFSQRKLSTLKDESSRAWTKSSINT.

The protein belongs to the G-protein coupled receptor 1 family.

It is found in the cell membrane. In terms of biological role, receptor for ghrelin, coupled to G-alpha-11 proteins. Stimulates growth hormone secretion. Also binds other growth hormone releasing peptides (GHRP) (e.g. Met-enkephalin and GHRP-6) as well as non-peptide, low molecular weight secretagogues (e.g. L-692,429, MK-0677, adenosine). The protein is Growth hormone secretagogue receptor type 1 (Ghsr) of Mus musculus (Mouse).